A 452-amino-acid chain; its full sequence is Coproporphyrinogen III oxidase (452 aa).

FAD-binding positions include 10–15 (GGGISG), 36–37 (EP), 58–61 (GAEA), valine 242, tryptophan 390, and 426–428 (IGV).

This sequence belongs to the protoporphyrinogen/coproporphyrinogen oxidase family. Coproporphyrinogen III oxidase subfamily. FAD is required as a cofactor.

The protein resides in the cytoplasm. The enzyme catalyses coproporphyrinogen III + 3 O2 = coproporphyrin III + 3 H2O2. The protein operates within porphyrin-containing compound metabolism; protoheme biosynthesis. Involved in coproporphyrin-dependent heme b biosynthesis. Catalyzes the oxidation of coproporphyrinogen III to coproporphyrin III. The sequence is that of Coproporphyrinogen III oxidase from Mycobacterium bovis (strain ATCC BAA-935 / AF2122/97).